Reading from the N-terminus, the 224-residue chain is UPF0758 protein BLi02933/BL00636 (224 aa).

Residues 102-224 (VIRFPEDAAN…FVSLKEKGYL (123 aa)) form the MPN domain. Zn(2+)-binding residues include His173, His175, and Asp186. The short motif at 173 to 186 (HNHPSGDPAPSRED) is the JAMM motif element.

This sequence belongs to the UPF0758 family.

The sequence is that of UPF0758 protein BLi02933/BL00636 from Bacillus licheniformis (strain ATCC 14580 / DSM 13 / JCM 2505 / CCUG 7422 / NBRC 12200 / NCIMB 9375 / NCTC 10341 / NRRL NRS-1264 / Gibson 46).